Here is a 206-residue protein sequence, read N- to C-terminus: Amelogenin, Y isoform (206 aa).

The signal sequence occupies residues Met1–Ala16. The tract at residues Val118–Arg180 is disordered. The segment covering Gln128–Phe142 has biased composition (low complexity). Positions Gln143–Arg180 are enriched in pro residues.

This sequence belongs to the amelogenin family.

It is found in the secreted. It localises to the extracellular space. The protein localises to the extracellular matrix. Plays a role in biomineralization. Seems to regulate the formation of crystallites during the secretory stage of tooth enamel development. Thought to play a major role in the structural organization and mineralization of developing enamel. The protein is Amelogenin, Y isoform (AMELY) of Homo sapiens (Human).